Consider the following 216-residue polypeptide: Probable GTP-binding protein EngB (216 aa).

The 178-residue stretch at 37 to 214 (GSVEIAFAGR…RAAMIRLLDE (178 aa)) folds into the EngB-type G domain. GTP contacts are provided by residues 45–52 (GRSNVGKS), 72–76 (GRTQE), 92–95 (DMPG), 159–162 (TKAD), and 193–195 (TSS). Mg(2+)-binding residues include S52 and T74.

Belongs to the TRAFAC class TrmE-Era-EngA-EngB-Septin-like GTPase superfamily. EngB GTPase family. Mg(2+) is required as a cofactor.

In terms of biological role, necessary for normal cell division and for the maintenance of normal septation. The protein is Probable GTP-binding protein EngB of Rhodopseudomonas palustris (strain TIE-1).